Reading from the N-terminus, the 25-residue chain is Antifungal protein 1 (25 aa).

The interval 1 to 25 (QSERFEQQMQGQDFSHDERFLSQAA) is disordered. A compositionally biased stretch (basic and acidic residues) spans 14–25 (FSHDERFLSQAA).

The protein belongs to the 2S seed storage albumins family. As to expression, expressed in seed (at protein level). Not detected in pulp, stems and leaves.

Its function is as follows. Has strong antifungal activity against T.harzianum, F.oxysporum and A.fumigatus with IC(50) values of 32 ug/ml, 34 ug/ml and 40 ug/ml, restectively. Lacks antifungal activity against R.solani, P.brasiliensis and C.albicans. The polypeptide is Antifungal protein 1 (Passiflora edulis (Passion fruit)).